We begin with the raw amino-acid sequence, 288 residues long: 4-diphosphocytidyl-2-C-methyl-D-erythritol kinase (288 aa).

K8 is an active-site residue. 90 to 100 (PVGAGLAGGSS) contributes to the ATP binding site. D132 is an active-site residue.

The protein belongs to the GHMP kinase family. IspE subfamily.

It carries out the reaction 4-CDP-2-C-methyl-D-erythritol + ATP = 4-CDP-2-C-methyl-D-erythritol 2-phosphate + ADP + H(+). The protein operates within isoprenoid biosynthesis; isopentenyl diphosphate biosynthesis via DXP pathway; isopentenyl diphosphate from 1-deoxy-D-xylulose 5-phosphate: step 3/6. Functionally, catalyzes the phosphorylation of the position 2 hydroxy group of 4-diphosphocytidyl-2C-methyl-D-erythritol. This chain is 4-diphosphocytidyl-2-C-methyl-D-erythritol kinase, found in Chlamydia trachomatis serovar A (strain ATCC VR-571B / DSM 19440 / HAR-13).